The following is a 1368-amino-acid chain: DNA-directed RNA polymerase subunit beta (1368 aa).

This sequence belongs to the RNA polymerase beta chain family. In terms of assembly, the RNAP catalytic core consists of 2 alpha, 1 beta, 1 beta' and 1 omega subunit. When a sigma factor is associated with the core the holoenzyme is formed, which can initiate transcription.

It catalyses the reaction RNA(n) + a ribonucleoside 5'-triphosphate = RNA(n+1) + diphosphate. Functionally, DNA-dependent RNA polymerase catalyzes the transcription of DNA into RNA using the four ribonucleoside triphosphates as substrates. This is DNA-directed RNA polymerase subunit beta from Paraburkholderia phytofirmans (strain DSM 17436 / LMG 22146 / PsJN) (Burkholderia phytofirmans).